The primary structure comprises 201 residues: MAGRESDAVSLAGVVLAGGESRRMGRDKATLVLPGGSTTMVEHVLGIVGQRCEPVFVMAAQGQPLPPLQVPVLRDELRGLGPLPATGRGLRAAAEAGARFAFVCAVDMPGLTVDLIDDLVRSAIETDAEVVLPWDGRSHYLAAIYRTDLAERVDALVAAGERKTSALADSSDTQRIVMSDSAPLANVNTAADLPAPVRPGH.

GTP contacts are provided by residues 16–18 (LAG), Lys-28, Asp-75, and Asp-107. Mg(2+) is bound at residue Asp-107.

Belongs to the MobA family. It depends on Mg(2+) as a cofactor.

The protein localises to the cytoplasm. It carries out the reaction Mo-molybdopterin + GTP + H(+) = Mo-molybdopterin guanine dinucleotide + diphosphate. Transfers a GMP moiety from GTP to Mo-molybdopterin (Mo-MPT) cofactor (Moco or molybdenum cofactor) to form Mo-molybdopterin guanine dinucleotide (Mo-MGD) cofactor. This is Probable molybdenum cofactor guanylyltransferase from Mycobacterium ulcerans (strain Agy99).